The following is a 212-amino-acid chain: 3,4-dihydroxy-2-butanone 4-phosphate synthase (212 aa).

Residues 37 to 38 (RE), Asp42, 150 to 154 (RRGHT), and Glu174 each bind D-ribulose 5-phosphate. Glu38 is a binding site for Mg(2+). A Mg(2+)-binding site is contributed by His153.

This sequence belongs to the DHBP synthase family. In terms of assembly, homodimer. It depends on Mg(2+) as a cofactor. Mn(2+) is required as a cofactor.

The enzyme catalyses D-ribulose 5-phosphate = (2S)-2-hydroxy-3-oxobutyl phosphate + formate + H(+). It functions in the pathway cofactor biosynthesis; riboflavin biosynthesis; 2-hydroxy-3-oxobutyl phosphate from D-ribulose 5-phosphate: step 1/1. Catalyzes the conversion of D-ribulose 5-phosphate to formate and 3,4-dihydroxy-2-butanone 4-phosphate. The protein is 3,4-dihydroxy-2-butanone 4-phosphate synthase of Shewanella piezotolerans (strain WP3 / JCM 13877).